The primary structure comprises 613 residues: Phosphomethylpyrimidine synthase (613 aa).

Substrate contacts are provided by residues Asn-215, Met-244, Tyr-273, His-309, 329 to 331 (SRG), 370 to 373 (DGLR), and Glu-409. A Zn(2+)-binding site is contributed by His-413. Residue Tyr-436 coordinates substrate. A Zn(2+)-binding site is contributed by His-477. Positions 557, 560, and 565 each coordinate [4Fe-4S] cluster.

The protein belongs to the ThiC family. Homodimer. The cofactor is [4Fe-4S] cluster.

The catalysed reaction is 5-amino-1-(5-phospho-beta-D-ribosyl)imidazole + S-adenosyl-L-methionine = 4-amino-2-methyl-5-(phosphooxymethyl)pyrimidine + CO + 5'-deoxyadenosine + formate + L-methionine + 3 H(+). The protein operates within cofactor biosynthesis; thiamine diphosphate biosynthesis. Its function is as follows. Catalyzes the synthesis of the hydroxymethylpyrimidine phosphate (HMP-P) moiety of thiamine from aminoimidazole ribotide (AIR) in a radical S-adenosyl-L-methionine (SAM)-dependent reaction. The polypeptide is Phosphomethylpyrimidine synthase (Paramagnetospirillum magneticum (strain ATCC 700264 / AMB-1) (Magnetospirillum magneticum)).